The chain runs to 350 residues: METVESSSSAELLRAQTHFSRQVFSFQNFAALKCALQLGIPDAIKQHGKPMNLSELTSALPINPSKAPCIHRLMRLLVNAGYFAQENECFALTSLGRLLLKDDPLHIRALVLSEFHTALVMPWFALSEWFKNDDVAPFATAHGKSFWDYTSCDPELRNVFDGAMACDSHLIAKALVTEFKYLFEGLKSLVDVGGGNGTLARSIAKAFTNLKCTVCDLPEAVANEQGDGNLDFVAGDMFDRVPSADAILLKSILHDWSDENCVKILKNCKRAISGKDKGGKVIVIDGVVELQKKAGNDDPGLDNMDMQMLVLFNSKERNEKEWAKLFSDAGFSDYGIVRTFGWWCIMELSP.

Residues G193, D216, D236, M237, and K250 each coordinate S-adenosyl-L-methionine. H254 (proton acceptor) is an active-site residue.

Belongs to the class I-like SAM-binding methyltransferase superfamily. Cation-independent O-methyltransferase family. In terms of tissue distribution, expressed in roots.

It localises to the cytoplasm. It is found in the cytosol. The catalysed reaction is cephaeline + S-adenosyl-L-methionine = emetine + S-adenosyl-L-homocysteine + H(+). It carries out the reaction deacetylisoipecoside + S-adenosyl-L-methionine = 6-O-methyldeacetylisoipecoside + S-adenosyl-L-homocysteine + H(+). It catalyses the reaction 7-O-methyldeacetylisoipecoside + S-adenosyl-L-methionine = 6,7-O,O-dimethyldeacetylisoipecoside + S-adenosyl-L-homocysteine + H(+). The enzyme catalyses norcoclaurine + S-adenosyl-L-methionine = coclaurine + S-adenosyl-L-homocysteine + H(+). The catalysed reaction is (S)-norprotosinomenine + S-adenosyl-L-methionine = (S)-6-O-methylnorprotosinomenine + S-adenosyl-L-homocysteine + H(+). It carries out the reaction (R)-norprotosinomenine + S-adenosyl-L-methionine = (R)-6-O-methylnorprotosinomenine + S-adenosyl-L-homocysteine + H(+). It participates in alkaloid biosynthesis. Its function is as follows. O-methyltransferase involved in the biosynthesis of ipecac and benzylisoquinoline monoterpenoid-isoquinoline alkaloids natural products, starting by the condensation of dopamine and secologanin, and including emetine and cephaeline, drugs used both as anti-protozoal (e.g. treatment of ameobiasis) and as emetic agents. Mediates cephaeline 6'-O-methylation to produce emetine. Catalyzes the 6-O-methylation of N-deacetylisoipecoside, 7-O-methyl-N-deacetylisoipecoside, isococlaurine, norcoclaurine, (S)-norprotosinomenine and (R)-norprotosinomenine, and, with a lower efficiency, of 4'-O-methyllaudanosoline, isoorientaline and protosinomenine. Supports also the 4'-O-methylation of nororientaline. This chain is Cephaeline 6'-O-methyltransferase IpeOMT1, found in Carapichea ipecacuanha (Ipecac).